The chain runs to 626 residues: DNA (cytosine-5)-methyltransferase DRM2 (626 aa).

2 UBA domains span residues 59–101 (GFSD…ISKY) and 109–150 (SSKS…LLSC). The span at 160–187 (VEEEDGIDWSSSDDDTNYTDMLNSDDEK) shows a compositional bias: acidic residues. 2 disordered regions span residues 160–196 (VEEE…ENGS) and 245–282 (TEHE…PNPM). Residues 190-232 (NSNENGSKIRSLVKMGFSELEASLAVERCGENVDIAELTDFLC) form the UBA 3 domain. A compositionally biased stretch (basic and acidic residues) spans 262–276 (ESKGEPRSSVDDEPI). Residues 295–626 (THRSLPELAR…EVVRARMRGS (332 aa)) form the SAM-dependent MTase DRM-type domain.

Belongs to the class I-like SAM-binding methyltransferase superfamily. DRM-methyltransferase family. In terms of assembly, interacts with RDM1. As to expression, expressed in roots, inflorescences and at lower levels in leaves.

The protein resides in the nucleus. It is found in the nucleoplasm. It carries out the reaction a 2'-deoxycytidine in DNA + S-adenosyl-L-methionine = a 5-methyl-2'-deoxycytidine in DNA + S-adenosyl-L-homocysteine + H(+). Functionally, involved in de novo DNA methylation. Controls asymmetric and CpNpG methylation. Required for FWA gene silencing but not for the maintenance of SUP gene silencing. Functionally redundant to CMT3 to maintain non-CpG methylation. Involved in RNA-directed DNA methylation (RdDM). Acts as major DNA methyltransferase in the RdDM pathway, and is essential for RNA-directed de novo DNA methylation of cytosines in all sequence contexts. Associates with long non-coding RNA (lncRNA) produced by RNA polymerase V (Pol V). This association is dependent on AGO4 and IDN2, and results in DNA methylation of RdDM target loci. The polypeptide is DNA (cytosine-5)-methyltransferase DRM2 (DRM2) (Arabidopsis thaliana (Mouse-ear cress)).